Consider the following 277-residue polypeptide: Uridine-cytidine kinase 1 (277 aa).

The segment at methionine 1–glycine 30 is disordered. Residue glycine 30–threonine 38 coordinates ATP. Positions 87, 115, 120, 169, 178, and 186 each coordinate substrate. ATP is bound at residue aspartate 215. Over residues arginine 238–arginine 250 the composition is skewed to basic residues. Residues arginine 238–histidine 277 are disordered. At threonine 251 the chain carries Phosphothreonine. A compositionally biased stretch (basic and acidic residues) spans serine 268–histidine 277.

It belongs to the uridine kinase family.

The catalysed reaction is uridine + ATP = UMP + ADP + H(+). The enzyme catalyses cytidine + ATP = CMP + ADP + H(+). It functions in the pathway pyrimidine metabolism; CTP biosynthesis via salvage pathway; CTP from cytidine: step 1/3. It participates in pyrimidine metabolism; UMP biosynthesis via salvage pathway; UMP from uridine: step 1/1. Phosphorylates uridine and cytidine to uridine monophosphate and cytidine monophosphate. Does not phosphorylate deoxyribonucleosides or purine ribonucleosides. Can use ATP or GTP as a phosphate donor. The polypeptide is Uridine-cytidine kinase 1 (Uck1) (Mus musculus (Mouse)).